The chain runs to 369 residues: MTNNSQIKVIVGMSGGVDSSVSAYLLQQQGYQVEGLFMKNWEEDDSDEYCSAATDLADAQAVCDKLGIKLHTVNFAAEYWDNVFELFLAEYKAGRTPNPDILCNKEIKFKAFLEFAAEDLGADYIATGHYVRRDDSTGHPRLLRGLDNNKDQSYFLYTLSSEQIAQSLFPVGDLEKPQVRAIAEQLGLATAKKKDSTGICFIGERKFTEFLGRYLPAQPGVIETVDGKVIGEHQGLMYHTLGQRKGLGIGGLKDGDENPWYVVDKDVARNVLIVAQGHDHPRLFSDGLIAKQLDWVDRQVRREPFDCVVKTRYRQQDIPCHVEPLDDDTIKVTFASPQAAVTPGQSAVFYLGEECLGGGIIEQRFSGSV.

Residues G12–S19 and M38 contribute to the ATP site. The interaction with target base in tRNA stretch occupies residues N98–D100. C103 acts as the Nucleophile in catalysis. An intrachain disulfide couples C103 to C200. G128 lines the ATP pocket. The tract at residues K150 to Q152 is interaction with tRNA. The Cysteine persulfide intermediate role is filled by C200. The interval R312 to Y313 is interaction with tRNA.

Belongs to the MnmA/TRMU family.

It localises to the cytoplasm. It catalyses the reaction S-sulfanyl-L-cysteinyl-[protein] + uridine(34) in tRNA + AH2 + ATP = 2-thiouridine(34) in tRNA + L-cysteinyl-[protein] + A + AMP + diphosphate + H(+). Catalyzes the 2-thiolation of uridine at the wobble position (U34) of tRNA, leading to the formation of s(2)U34. This Tolumonas auensis (strain DSM 9187 / NBRC 110442 / TA 4) protein is tRNA-specific 2-thiouridylase MnmA.